A 704-amino-acid polypeptide reads, in one-letter code: DNA ligase (704 aa).

NAD(+) contacts are provided by residues aspartate 43 to aspartate 47, serine 92 to leucine 93, and glutamate 124. The active-site N6-AMP-lysine intermediate is lysine 126. The NAD(+) site is built by arginine 147, glutamate 182, lysine 298, and lysine 322. The Zn(2+) site is built by cysteine 427, cysteine 430, cysteine 445, and cysteine 451. The region spanning proline 625 to alanine 704 is the BRCT domain.

Belongs to the NAD-dependent DNA ligase family. LigA subfamily. The cofactor is Mg(2+). It depends on Mn(2+) as a cofactor.

It catalyses the reaction NAD(+) + (deoxyribonucleotide)n-3'-hydroxyl + 5'-phospho-(deoxyribonucleotide)m = (deoxyribonucleotide)n+m + AMP + beta-nicotinamide D-nucleotide.. Functionally, DNA ligase that catalyzes the formation of phosphodiester linkages between 5'-phosphoryl and 3'-hydroxyl groups in double-stranded DNA using NAD as a coenzyme and as the energy source for the reaction. It is essential for DNA replication and repair of damaged DNA. This chain is DNA ligase, found in Cereibacter sphaeroides (strain ATCC 17029 / ATH 2.4.9) (Rhodobacter sphaeroides).